The following is a 404-amino-acid chain: Argininosuccinate synthase (404 aa).

Residues 12–20 (AYSGGLDTS) and Ala39 contribute to the ATP site. Residues Tyr91 and Ser96 each contribute to the L-citrulline site. Residue Gly121 participates in ATP binding. L-aspartate contacts are provided by Thr123, Asn127, and Asp128. Asn127 serves as a coordination point for L-citrulline. L-citrulline contacts are provided by Arg131, Ser180, Ser189, Glu265, and Tyr277.

The protein belongs to the argininosuccinate synthase family. Type 1 subfamily. Homotetramer.

It is found in the cytoplasm. The enzyme catalyses L-citrulline + L-aspartate + ATP = 2-(N(omega)-L-arginino)succinate + AMP + diphosphate + H(+). Its pathway is amino-acid biosynthesis; L-arginine biosynthesis; L-arginine from L-ornithine and carbamoyl phosphate: step 2/3. The protein is Argininosuccinate synthase of Vibrio cholerae serotype O1 (strain ATCC 39541 / Classical Ogawa 395 / O395).